The chain runs to 539 residues: uncharacterized protein (539 aa).

The Acyl-ester intermediate role is filled by serine 216.

The protein belongs to the type-B carboxylesterase/lipase family.

The protein localises to the cytoplasm. Its subcellular location is the nucleus. This is an uncharacterized protein from Schizosaccharomyces pombe (strain 972 / ATCC 24843) (Fission yeast).